The sequence spans 308 residues: 4-diphosphocytidyl-2-C-methyl-D-erythritol kinase (308 aa).

Residue Lys23 is part of the active site. 108–118 (PVAAGIGGGSA) lines the ATP pocket. The active site involves Asp150.

The protein belongs to the GHMP kinase family. IspE subfamily.

The enzyme catalyses 4-CDP-2-C-methyl-D-erythritol + ATP = 4-CDP-2-C-methyl-D-erythritol 2-phosphate + ADP + H(+). Its pathway is isoprenoid biosynthesis; isopentenyl diphosphate biosynthesis via DXP pathway; isopentenyl diphosphate from 1-deoxy-D-xylulose 5-phosphate: step 3/6. Its function is as follows. Catalyzes the phosphorylation of the position 2 hydroxy group of 4-diphosphocytidyl-2C-methyl-D-erythritol. In Nitrobacter winogradskyi (strain ATCC 25391 / DSM 10237 / CIP 104748 / NCIMB 11846 / Nb-255), this protein is 4-diphosphocytidyl-2-C-methyl-D-erythritol kinase.